The sequence spans 185 residues: Lipid A acyltransferase PagP (185 aa).

Residues M1 to G14 form the signal peptide. C15 carries the N-palmitoyl cysteine lipid modification. C15 carries the S-diacylglycerol cysteine lipid modification. Catalysis depends on residues H57, D100, and S101.

This sequence belongs to the lipid A palmitoyltransferase family. As to quaternary structure, homodimer.

The protein localises to the cell outer membrane. The enzyme catalyses a lipid A + a 1,2-diacyl-sn-glycero-3-phosphocholine = a hepta-acyl lipid A + a 2-acyl-sn-glycero-3-phosphocholine. It carries out the reaction a lipid IVA + a 1,2-diacyl-sn-glycero-3-phosphocholine = a lipid IVB + a 2-acyl-sn-glycero-3-phosphocholine. The catalysed reaction is a lipid IIA + a 1,2-diacyl-sn-glycero-3-phosphocholine = a lipid IIB + a 2-acyl-sn-glycero-3-phosphocholine. Transfers a fatty acid residue from the sn-1 position of a phospholipid to the N-linked hydroxyfatty acid chain on the proximal unit of lipid A or its precursors. This chain is Lipid A acyltransferase PagP, found in Erwinia pyrifoliae (strain DSM 12163 / CIP 106111 / Ep16/96).